The following is a 247-amino-acid chain: Glucosamine-6-phosphate deaminase (247 aa).

The active-site Proton acceptor; for enolization step is the D67. The active-site For ring-opening step is N136. H138 (proton acceptor; for ring-opening step) is an active-site residue. Catalysis depends on E143, which acts as the For ring-opening step.

Belongs to the glucosamine/galactosamine-6-phosphate isomerase family. NagB subfamily.

It carries out the reaction alpha-D-glucosamine 6-phosphate + H2O = beta-D-fructose 6-phosphate + NH4(+). Its pathway is amino-sugar metabolism; N-acetylneuraminate degradation; D-fructose 6-phosphate from N-acetylneuraminate: step 5/5. Catalyzes the reversible isomerization-deamination of glucosamine 6-phosphate (GlcN6P) to form fructose 6-phosphate (Fru6P) and ammonium ion. This chain is Glucosamine-6-phosphate deaminase, found in Shouchella clausii (strain KSM-K16) (Alkalihalobacillus clausii).